A 131-amino-acid chain; its full sequence is Small ribosomal subunit protein uS8 (131 aa).

It belongs to the universal ribosomal protein uS8 family. In terms of assembly, part of the 30S ribosomal subunit. Contacts proteins S5 and S12.

In terms of biological role, one of the primary rRNA binding proteins, it binds directly to 16S rRNA central domain where it helps coordinate assembly of the platform of the 30S subunit. The chain is Small ribosomal subunit protein uS8 from Finegoldia magna (strain ATCC 29328 / DSM 20472 / WAL 2508) (Peptostreptococcus magnus).